The sequence spans 53 residues: Tsetse thrombin inhibitor (53 aa).

Residues 1 to 21 (MKFFTVLFFLLSIIYLIVAAP) form the signal peptide.

Expressed at high levels in salivary glands and midguts of adult tsetse flies.

The protein localises to the secreted. Functionally, potent and specific inhibitor of human thrombin. It is also a potent inhibitor of thrombin-induced platelet aggregation. It is capable of antagonizing host hemostasis and facilitating blood feeding. The polypeptide is Tsetse thrombin inhibitor (TTI) (Glossina morsitans morsitans (Savannah tsetse fly)).